Here is a 372-residue protein sequence, read N- to C-terminus: Queuine tRNA-ribosyltransferase (372 aa).

Aspartate 89 functions as the Proton acceptor in the catalytic mechanism. Residues 89-93 (DSGGF), aspartate 143, glutamine 185, and glycine 212 each bind substrate. Residues 243-249 (GVGKPED) form an RNA binding region. Residue aspartate 262 is the Nucleophile of the active site. Residues 267–271 (TRNAR) are RNA binding; important for wobble base 34 recognition. Zn(2+) is bound by residues cysteine 300, cysteine 302, cysteine 305, and histidine 331.

It belongs to the queuine tRNA-ribosyltransferase family. Homodimer. Within each dimer, one monomer is responsible for RNA recognition and catalysis, while the other monomer binds to the replacement base PreQ1. Zn(2+) serves as cofactor.

The catalysed reaction is 7-aminomethyl-7-carbaguanine + guanosine(34) in tRNA = 7-aminomethyl-7-carbaguanosine(34) in tRNA + guanine. It functions in the pathway tRNA modification; tRNA-queuosine biosynthesis. Functionally, catalyzes the base-exchange of a guanine (G) residue with the queuine precursor 7-aminomethyl-7-deazaguanine (PreQ1) at position 34 (anticodon wobble position) in tRNAs with GU(N) anticodons (tRNA-Asp, -Asn, -His and -Tyr). Catalysis occurs through a double-displacement mechanism. The nucleophile active site attacks the C1' of nucleotide 34 to detach the guanine base from the RNA, forming a covalent enzyme-RNA intermediate. The proton acceptor active site deprotonates the incoming PreQ1, allowing a nucleophilic attack on the C1' of the ribose to form the product. After dissociation, two additional enzymatic reactions on the tRNA convert PreQ1 to queuine (Q), resulting in the hypermodified nucleoside queuosine (7-(((4,5-cis-dihydroxy-2-cyclopenten-1-yl)amino)methyl)-7-deazaguanosine). The chain is Queuine tRNA-ribosyltransferase from Pseudomonas aeruginosa (strain LESB58).